The sequence spans 283 residues: Bifunctional protein FolD (283 aa).

NADP(+) contacts are provided by residues 159-161 (GRS), Ser184, and Ile225.

This sequence belongs to the tetrahydrofolate dehydrogenase/cyclohydrolase family. In terms of assembly, homodimer.

It carries out the reaction (6R)-5,10-methylene-5,6,7,8-tetrahydrofolate + NADP(+) = (6R)-5,10-methenyltetrahydrofolate + NADPH. The enzyme catalyses (6R)-5,10-methenyltetrahydrofolate + H2O = (6R)-10-formyltetrahydrofolate + H(+). The protein operates within one-carbon metabolism; tetrahydrofolate interconversion. In terms of biological role, catalyzes the oxidation of 5,10-methylenetetrahydrofolate to 5,10-methenyltetrahydrofolate and then the hydrolysis of 5,10-methenyltetrahydrofolate to 10-formyltetrahydrofolate. In Methanoculleus marisnigri (strain ATCC 35101 / DSM 1498 / JR1), this protein is Bifunctional protein FolD.